The primary structure comprises 266 residues: GTP cyclohydrolase FolE2 (266 aa).

This sequence belongs to the GTP cyclohydrolase IV family.

The enzyme catalyses GTP + H2O = 7,8-dihydroneopterin 3'-triphosphate + formate + H(+). Its pathway is cofactor biosynthesis; 7,8-dihydroneopterin triphosphate biosynthesis; 7,8-dihydroneopterin triphosphate from GTP: step 1/1. In terms of biological role, converts GTP to 7,8-dihydroneopterin triphosphate. The protein is GTP cyclohydrolase FolE2 of Methylobacillus flagellatus (strain ATCC 51484 / DSM 6875 / VKM B-1610 / KT).